Reading from the N-terminus, the 331-residue chain is Phosphate acyltransferase (331 aa).

Belongs to the PlsX family. In terms of assembly, homodimer. Probably interacts with PlsY.

The protein localises to the cytoplasm. It carries out the reaction a fatty acyl-[ACP] + phosphate = an acyl phosphate + holo-[ACP]. Its pathway is lipid metabolism; phospholipid metabolism. In terms of biological role, catalyzes the reversible formation of acyl-phosphate (acyl-PO(4)) from acyl-[acyl-carrier-protein] (acyl-ACP). This enzyme utilizes acyl-ACP as fatty acyl donor, but not acyl-CoA. The chain is Phosphate acyltransferase from Lactococcus lactis subsp. cremoris (strain SK11).